Consider the following 901-residue polypeptide: HTH-type transcriptional regulator MalT (901 aa).

39–46 (SPAGYGKT) contributes to the ATP binding site. The region spanning 829-894 (ELIRTSPLTQ…DAVQHAQQLL (66 aa)) is the HTH luxR-type domain. The segment at residues 853–872 (NEQIAGELAVAATTIKTHIR) is a DNA-binding region (H-T-H motif).

This sequence belongs to the MalT family. Monomer in solution. Oligomerizes to an active state in the presence of the positive effectors ATP and maltotriose.

Its activity is regulated as follows. Activated by ATP and maltotriose, which are both required for DNA binding. Functionally, positively regulates the transcription of the maltose regulon whose gene products are responsible for uptake and catabolism of malto-oligosaccharides. Specifically binds to the promoter region of its target genes, recognizing a short DNA motif called the MalT box. The chain is HTH-type transcriptional regulator MalT from Salmonella gallinarum (strain 287/91 / NCTC 13346).